We begin with the raw amino-acid sequence, 143 residues long: MTIERTFSIIKPNAVAKNVIGAIIQRFESTGLTVVGAKMLQLTREQAEGFYAEHKGKPFFDSLVDFMISGPILVQVLEGEDAVRRNREIMGATNLANALAGTLRADYADSFTENAVHGSDSAESAAREIAYFFADGEVCTRIR.

ATP is bound by residues lysine 11, phenylalanine 59, arginine 87, threonine 93, arginine 104, and asparagine 114. Histidine 117 serves as the catalytic Pros-phosphohistidine intermediate.

This sequence belongs to the NDK family. Homotetramer. Mg(2+) serves as cofactor.

Its subcellular location is the cytoplasm. It carries out the reaction a 2'-deoxyribonucleoside 5'-diphosphate + ATP = a 2'-deoxyribonucleoside 5'-triphosphate + ADP. It catalyses the reaction a ribonucleoside 5'-diphosphate + ATP = a ribonucleoside 5'-triphosphate + ADP. Major role in the synthesis of nucleoside triphosphates other than ATP. The ATP gamma phosphate is transferred to the NDP beta phosphate via a ping-pong mechanism, using a phosphorylated active-site intermediate. This Sodalis glossinidius (strain morsitans) protein is Nucleoside diphosphate kinase.